The sequence spans 229 residues: 2,3-bisphosphoglycerate-dependent phosphoglycerate mutase (229 aa).

Residues 7-14 (RHGQSEWN), 20-21 (TG), Arg59, 86-89 (ERHY), Lys97, 113-114 (RR), and 182-183 (GN) each bind substrate. His8 functions as the Tele-phosphohistidine intermediate in the catalytic mechanism. Glu86 acts as the Proton donor/acceptor in catalysis.

The protein belongs to the phosphoglycerate mutase family. BPG-dependent PGAM subfamily.

The enzyme catalyses (2R)-2-phosphoglycerate = (2R)-3-phosphoglycerate. The protein operates within carbohydrate degradation; glycolysis; pyruvate from D-glyceraldehyde 3-phosphate: step 3/5. In terms of biological role, catalyzes the interconversion of 2-phosphoglycerate and 3-phosphoglycerate. This chain is 2,3-bisphosphoglycerate-dependent phosphoglycerate mutase, found in Listeria innocua serovar 6a (strain ATCC BAA-680 / CLIP 11262).